Reading from the N-terminus, the 383-residue chain is G-protein coupled receptor E1 (383 aa).

Helical transmembrane passes span 13 to 35 (SSLA…TTIA), 78 to 98 (LYLL…IIVI), 109 to 129 (MLLL…PFWM), 160 to 180 (VFCI…AVTA), 190 to 210 (IVTC…EFFF), 242 to 262 (VIML…YVII), 279 to 299 (LIFV…IVLL), 323 to 343 (LITK…YAFV), and 351 to 371 (LYHF…PFLS). Cysteines 145 and 222 form a disulfide.

This sequence belongs to the G-protein coupled receptor 1 family.

It localises to the host membrane. The polypeptide is G-protein coupled receptor E1 (E1) (Equine herpesvirus 2 (strain 86/87) (EHV-2)).